The chain runs to 223 residues: 26S proteasome non-ATPase regulatory subunit 9 (223 aa).

Positions 103-121 (RDKEKQARDMAEAHKEAMS) are enriched in basic and acidic residues. The segment at 103-141 (RDKEKQARDMAEAHKEAMSRKLGQSESQGPPRAFAKVNS) is disordered. A PDZ domain is found at 108 to 195 (QARDMAEAHK…KPLNVTVIRR (88 aa)). Serine 129 is modified (phosphoserine).

It belongs to the proteasome subunit p27 family. As to quaternary structure, interacts with PSMC3. Part of a transient complex (modulator) containing PSMD9, PSMC6 and PSMC3 formed during the assembly of the 26S proteasome. In terms of tissue distribution, expressed in all tissues tested, highly expressed in liver and kidney.

Its function is as follows. Acts as a chaperone during the assembly of the 26S proteasome, specifically of the base subcomplex of the PA700/19S regulatory complex (RC). During the base subcomplex assembly is part of an intermediate PSMD9:PSMC6:PSMC3 module, also known as modulator trimer complex; PSMD9 is released during the further base assembly process. The protein is 26S proteasome non-ATPase regulatory subunit 9 (PSMD9) of Homo sapiens (Human).